The following is a 105-amino-acid chain: Large ribosomal subunit protein uL24 (105 aa).

Residues His-67–Ile-105 are disordered.

Belongs to the universal ribosomal protein uL24 family. As to quaternary structure, part of the 50S ribosomal subunit.

In terms of biological role, one of two assembly initiator proteins, it binds directly to the 5'-end of the 23S rRNA, where it nucleates assembly of the 50S subunit. Its function is as follows. One of the proteins that surrounds the polypeptide exit tunnel on the outside of the subunit. The polypeptide is Large ribosomal subunit protein uL24 (Bacteroides thetaiotaomicron (strain ATCC 29148 / DSM 2079 / JCM 5827 / CCUG 10774 / NCTC 10582 / VPI-5482 / E50)).